A 366-amino-acid chain; its full sequence is MRVLAAMSGGVDSAVAAARAAEAGHDVTGIHLALSRNPQSYRSGARGCCTIEDSNDARRAADVIGIPFYVWDLSDRFHEDVVEDFMAEYAAGRTPNPCLRCNEKIKFAAVLDRALGLGFDAVATGHYARLVAGADGLVEMHRAVDHGKDQSYVLGVLDQGQLRHSLFPLGGSTKDEVRREAAERGLLVADKPDSHDICFIADGDNAGWLREKLGDRAPHHEGTIVDDDTGEVLGRHEGSYGFTIGQRKGLRIGRPAPDGRPRFVLDIEPVSGTVTVGPHERLAVHRLRGIRPRWCGTVPDRLSGTVQLRAHGEEHRAVLVRDGDEVDIELLEPAYGIAPGQAAVLYDGSRVVGSATISATDRVAAR.

Residues 6–13 (AMSGGVDS) and L32 contribute to the ATP site. The Nucleophile role is filled by C101. An intrachain disulfide couples C101 to C198. An ATP-binding site is contributed by G125. The interaction with tRNA stretch occupies residues 148–150 (KDQ). C198 acts as the Cysteine persulfide intermediate in catalysis.

It belongs to the MnmA/TRMU family.

The protein resides in the cytoplasm. The catalysed reaction is S-sulfanyl-L-cysteinyl-[protein] + uridine(34) in tRNA + AH2 + ATP = 2-thiouridine(34) in tRNA + L-cysteinyl-[protein] + A + AMP + diphosphate + H(+). Catalyzes the 2-thiolation of uridine at the wobble position (U34) of tRNA, leading to the formation of s(2)U34. The sequence is that of tRNA-specific 2-thiouridylase MnmA from Nocardioides sp. (strain ATCC BAA-499 / JS614).